Reading from the N-terminus, the 130-residue chain is Putative transposase for insertion sequence element IS6501 (130 aa).

It belongs to the transposase 11 family.

Involved in the transposition of the insertion sequence. The sequence is that of Putative transposase for insertion sequence element IS6501 from Brucella ovis (strain ATCC 25840 / 63/290 / NCTC 10512).